The sequence spans 398 residues: Phosphoglycerate kinase (398 aa).

Substrate is bound by residues 22–24 (DFN), Arg-38, 61–64 (HLGR), Arg-120, and Arg-153. ATP is bound by residues Lys-206, Gly-297, Glu-328, and 354–357 (GGDT).

The protein belongs to the phosphoglycerate kinase family. In terms of assembly, monomer.

The protein resides in the cytoplasm. The enzyme catalyses (2R)-3-phosphoglycerate + ATP = (2R)-3-phospho-glyceroyl phosphate + ADP. It functions in the pathway carbohydrate degradation; glycolysis; pyruvate from D-glyceraldehyde 3-phosphate: step 2/5. This Nautilia profundicola (strain ATCC BAA-1463 / DSM 18972 / AmH) protein is Phosphoglycerate kinase.